A 356-amino-acid polypeptide reads, in one-letter code: ATP-dependent 6-phosphofructokinase (356 aa).

ATP-binding positions include Gly-15, 78–79 (KG), and 115–118 (GEGT). Glu-116 lines the Mg(2+) pocket. Residues 138–140 (TID), Arg-175, 182–184 (MGR), Glu-235, Arg-272, and 278–281 (HLQR) contribute to the substrate site. Catalysis depends on Asp-140, which acts as the Proton acceptor.

This sequence belongs to the phosphofructokinase type A (PFKA) family. Mixed-substrate PFK group III subfamily. In terms of assembly, homodimer or homotetramer. Mg(2+) is required as a cofactor.

Its subcellular location is the cytoplasm. The enzyme catalyses beta-D-fructose 6-phosphate + ATP = beta-D-fructose 1,6-bisphosphate + ADP + H(+). Its pathway is carbohydrate degradation; glycolysis; D-glyceraldehyde 3-phosphate and glycerone phosphate from D-glucose: step 3/4. Functionally, catalyzes the phosphorylation of D-fructose 6-phosphate to fructose 1,6-bisphosphate by ATP, the first committing step of glycolysis. The sequence is that of ATP-dependent 6-phosphofructokinase from Chloroflexus aurantiacus (strain ATCC 29366 / DSM 635 / J-10-fl).